We begin with the raw amino-acid sequence, 437 residues long: Adenylosuccinate synthetase (437 aa).

Residues 12–18 (GDEGKGK) and 40–42 (GHT) each bind GTP. Residue Asp13 is the Proton acceptor of the active site. Mg(2+)-binding residues include Asp13 and Gly40. IMP is bound by residues 13 to 16 (DEGK), 38 to 41 (NAGH), Thr128, Arg142, Gln223, Thr238, and Arg302. The active-site Proton donor is the His41. 298–304 (TTTGRKR) serves as a coordination point for substrate. GTP is bound by residues Arg304, 330-332 (KLD), and 412-414 (SLG).

This sequence belongs to the adenylosuccinate synthetase family. In terms of assembly, homodimer. Requires Mg(2+) as cofactor.

Its subcellular location is the cytoplasm. It catalyses the reaction IMP + L-aspartate + GTP = N(6)-(1,2-dicarboxyethyl)-AMP + GDP + phosphate + 2 H(+). It functions in the pathway purine metabolism; AMP biosynthesis via de novo pathway; AMP from IMP: step 1/2. Functionally, plays an important role in the de novo pathway of purine nucleotide biosynthesis. Catalyzes the first committed step in the biosynthesis of AMP from IMP. The protein is Adenylosuccinate synthetase of Trichodesmium erythraeum (strain IMS101).